A 25-amino-acid chain; its full sequence is Chaperonin GroEL (25 aa).

The protein belongs to the chaperonin (HSP60) family. Forms a cylinder of 14 subunits composed of two heptameric rings stacked back-to-back. Interacts with the co-chaperonin GroES.

It is found in the cytoplasm. It carries out the reaction ATP + H2O + a folded polypeptide = ADP + phosphate + an unfolded polypeptide.. In terms of biological role, together with its co-chaperonin GroES, plays an essential role in assisting protein folding. The GroEL-GroES system forms a nano-cage that allows encapsulation of the non-native substrate proteins and provides a physical environment optimized to promote and accelerate protein folding. The chain is Chaperonin GroEL from Delftia acidovorans (Pseudomonas acidovorans).